Consider the following 131-residue polypeptide: Nitrogenase-stabilizing/protective protein NifW (131 aa).

It belongs to the NifW family. Homotrimer; associates with NifD.

Its function is as follows. May protect the nitrogenase Fe-Mo protein from oxidative damage. The polypeptide is Nitrogenase-stabilizing/protective protein NifW (Frankia alni (strain DSM 45986 / CECT 9034 / ACN14a)).